Here is a 187-residue protein sequence, read N- to C-terminus: Acireductone dioxygenase 4 (187 aa).

At Ala2 the chain carries N-acetylalanine. Fe(2+) is bound by residues His89, His91, Glu95, and His134. Residues His89, His91, Glu95, and His134 each contribute to the Ni(2+) site.

Belongs to the acireductone dioxygenase (ARD) family. It depends on Fe(2+) as a cofactor. Ni(2+) serves as cofactor.

It localises to the cytoplasm. It is found in the nucleus. It catalyses the reaction 1,2-dihydroxy-5-(methylsulfanyl)pent-1-en-3-one + O2 = 4-methylsulfanyl-2-oxobutanoate + formate + 2 H(+). It carries out the reaction 1,2-dihydroxy-5-(methylsulfanyl)pent-1-en-3-one + O2 = 3-(methylsulfanyl)propanoate + CO + formate + 2 H(+). Its pathway is amino-acid biosynthesis; L-methionine biosynthesis via salvage pathway; L-methionine from S-methyl-5-thio-alpha-D-ribose 1-phosphate: step 5/6. Catalyzes 2 different reactions between oxygen and the acireductone 1,2-dihydroxy-3-keto-5-methylthiopentene (DHK-MTPene) depending upon the metal bound in the active site. Fe-containing acireductone dioxygenase (Fe-ARD) produces formate and 2-keto-4-methylthiobutyrate (KMTB), the alpha-ketoacid precursor of methionine in the methionine recycle pathway. Ni-containing acireductone dioxygenase (Ni-ARD) produces methylthiopropionate, carbon monoxide and formate, and does not lie on the methionine recycle pathway. The sequence is that of Acireductone dioxygenase 4 (ARD4) from Arabidopsis thaliana (Mouse-ear cress).